Reading from the N-terminus, the 38-residue chain is Photosystem II reaction center protein L (38 aa).

Residues 17-37 traverse the membrane as a helical segment; sequence SLFWGLLLIFVLAVLFSSYFF.

This sequence belongs to the PsbL family. PSII is composed of 1 copy each of membrane proteins PsbA, PsbB, PsbC, PsbD, PsbE, PsbF, PsbH, PsbI, PsbJ, PsbK, PsbL, PsbM, PsbT, PsbX, PsbY, PsbZ, Psb30/Ycf12, at least 3 peripheral proteins of the oxygen-evolving complex and a large number of cofactors. It forms dimeric complexes.

The protein resides in the plastid. It localises to the chloroplast thylakoid membrane. One of the components of the core complex of photosystem II (PSII). PSII is a light-driven water:plastoquinone oxidoreductase that uses light energy to abstract electrons from H(2)O, generating O(2) and a proton gradient subsequently used for ATP formation. It consists of a core antenna complex that captures photons, and an electron transfer chain that converts photonic excitation into a charge separation. This subunit is found at the monomer-monomer interface and is required for correct PSII assembly and/or dimerization. The protein is Photosystem II reaction center protein L of Rhodomonas salina (Cryptomonas salina).